The sequence spans 863 residues: Alanine--tRNA ligase (863 aa).

Zn(2+)-binding residues include His-552, His-556, Cys-654, and His-658.

This sequence belongs to the class-II aminoacyl-tRNA synthetase family. Requires Zn(2+) as cofactor.

It is found in the cytoplasm. The enzyme catalyses tRNA(Ala) + L-alanine + ATP = L-alanyl-tRNA(Ala) + AMP + diphosphate. Its function is as follows. Catalyzes the attachment of alanine to tRNA(Ala) in a two-step reaction: alanine is first activated by ATP to form Ala-AMP and then transferred to the acceptor end of tRNA(Ala). Also edits incorrectly charged Ser-tRNA(Ala) and Gly-tRNA(Ala) via its editing domain. This chain is Alanine--tRNA ligase, found in Nitrosomonas eutropha (strain DSM 101675 / C91 / Nm57).